The sequence spans 362 residues: Adenosine deaminase (362 aa).

Residues H19 and H21 each contribute to the Zn(2+) site. Residues H21, D23, and G181 each contribute to the substrate site. Residue H208 participates in Zn(2+) binding. The Proton donor role is filled by E211. D300 provides a ligand contact to Zn(2+).

It belongs to the metallo-dependent hydrolases superfamily. Adenosine and AMP deaminases family. Adenosine deaminase subfamily. The cofactor is Zn(2+).

The enzyme catalyses adenosine + H2O + H(+) = inosine + NH4(+). The catalysed reaction is 2'-deoxyadenosine + H2O + H(+) = 2'-deoxyinosine + NH4(+). Its function is as follows. Catalyzes the hydrolytic deamination of adenosine and 2-deoxyadenosine. The protein is Adenosine deaminase of Mycobacterium ulcerans (strain Agy99).